The primary structure comprises 949 residues: MSKTRVSNLAEKLGIDTKEVLARLKALGYDAKAGSSTVDDEAVAKLTASRPAESGPEEVRVTTNIVRRRSRPSAAAEPEAEAPAVVEPAAPAAPAVAVEKAAPVIPERVSVVKKAVEAIVAPAVTEAAPVPAAVTAHVDAGTAAEPAVAQEASPAVTAAKPVPATPAAPPQPERASATQARILGMIEIPITPEARPYRREPGRGPGPGGDRGPRPTGGQDNRGPRPAGTQDNRGPRPTGGQDSRGPRPAGAQDSRGPRPAGPPRDAAAPRPAGARPVQLTQVDLPPQGEERRKTLGPNRKPGGPAKDTAADKAKKGAAAKGKGREQLSKQALLSREERQFDPFHKSRKKGKEREEPGKTELTTPKAIKRIIKISETITIGELAKRMGIKATDLIKAMMKMGSMVTINHVLDHDAAVLLASDYGYEVENVAVDLDEILEFTPDAPELLQERPPVVTIMGHVDHGKTSLLDAIREANVIAGEAGGITQHIGAYDVELHGRKITFLDTPGHEAFTAMRARGAKVTDIVILVVAADDGVMPQTKEAINHSKAAGVPIIVAINKIDKPDARPEKVKQELTEHGIVSSEWGGDVTMVEVSAKKRLNLEELLEMILLQADLMDLKANPDKAAKGTIVEGKLDKGRGPVATVLVQEGTLRTGDYCVVGVHSGRVRAMQNDRGERVLAAGPAMPVEVVGLPGVPDAGDIFVAMTDEKQAKEIATLRQIKQRELELAKHAKMSLEQLYEKIQKGEVKDLNVIVKADVQGSVEAVAESLRKLSTEAVRLNVIHTAVGAITETDVNLATASNAIIIGFSIRPEVKAQAMAEKEGVDIRLYNVIYDAVDDVRKAMEGLLEPVFKEKYLGRAEIREIFSVPKVGNVAGCYIQDGKILRNAQVRLLRDNVVVYQGKLGTLRRFKDDVKEVATGYECGMGLENYNDIKVGDIIEAFEMEKVAAKL.

3 disordered regions span residues 46 to 82 (LTAS…EAEA), 145 to 176 (EPAV…ERAS), and 188 to 361 (IPIT…KTEL). Residues 152–162 (ASPAVTAAKPV) are compositionally biased toward low complexity. The span at 163-172 (PATPAAPPQP) shows a compositional bias: pro residues. Residues 263-276 (PRDAAAPRPAGARP) show a composition bias toward low complexity. A compositionally biased stretch (basic and acidic residues) spans 334–344 (SREERQFDPFH). The region spanning 449–618 (ERPPVVTIMG…LLQADLMDLK (170 aa)) is the tr-type G domain. Residues 458–465 (GHVDHGKT) are G1. 458-465 (GHVDHGKT) serves as a coordination point for GTP. The tract at residues 483–487 (GITQH) is G2. The interval 504 to 507 (DTPG) is G3. GTP-binding positions include 504–508 (DTPGH) and 558–561 (NKID). A G4 region spans residues 558–561 (NKID). Residues 594 to 596 (SAK) form a G5 region.

It belongs to the TRAFAC class translation factor GTPase superfamily. Classic translation factor GTPase family. IF-2 subfamily.

It localises to the cytoplasm. Functionally, one of the essential components for the initiation of protein synthesis. Protects formylmethionyl-tRNA from spontaneous hydrolysis and promotes its binding to the 30S ribosomal subunits. Also involved in the hydrolysis of GTP during the formation of the 70S ribosomal complex. This chain is Translation initiation factor IF-2, found in Trichlorobacter lovleyi (strain ATCC BAA-1151 / DSM 17278 / SZ) (Geobacter lovleyi).